The primary structure comprises 187 residues: Guanylate kinase (187 aa).

One can recognise a Guanylate kinase-like domain in the interval 5-183; it reads GRLTVLTGPS…ALKQLETHMQ (179 aa). 12–19 provides a ligand contact to ATP; it reads GPSGVGKG.

It belongs to the guanylate kinase family.

Its subcellular location is the cytoplasm. The enzyme catalyses GMP + ATP = GDP + ADP. The catalysed reaction is dZMP + ATP = dZDP + ADP. It functions in the pathway purine metabolism. Functionally, essential for recycling GMP and indirectly, cGMP. (Microbial infection) Catalyzes the phosphorylation of dZMP to dZDP, when the bacterium is infected by a phage that produces the substrate for the synthesis of dZTP (2- amino-2'-deoxyadenosine 5'-triphosphate), which is then used by the phage as a DNA polymerase substrate. The chain is Guanylate kinase from Synechococcus sp. (strain CC9902).